The following is a 546-amino-acid chain: Src substrate cortactin (546 aa).

The disordered stretch occupies residues 1–28; that stretch reads MWKASAGHAVSITQDDGGADDWETDPDF. Residues 17–28 show a composition bias toward acidic residues; sequence GGADDWETDPDF. Cortactin repeat units follow at residues 80 to 116, 117 to 153, 154 to 190, 191 to 227, 228 to 264, and 265 to 301; these read ASHG…SQVD, SVRG…SQKD, YSSG…SQKD, YSKG…SQKD, YVKG…SQKD, and YKTG…SQQD. Lysine 87 and lysine 107 each carry N6-acetyllysine. Phosphoserine is present on serine 113. Arginine 119 bears the Omega-N-methylarginine mark. Lysine 124 is modified (N6-acetyllysine). The residue at position 144 (lysine 144) is an N6-acetyllysine; alternate. Lysine 144 is covalently cross-linked (Glycyl lysine isopeptide (Lys-Gly) (interchain with G-Cter in SUMO1); alternate). Lysine 144 participates in a covalent cross-link: Glycyl lysine isopeptide (Lys-Gly) (interchain with G-Cter in SUMO2); alternate. Phosphoserine is present on serine 150. N6-acetyllysine is present on residues lysine 152, lysine 161, and lysine 171. At lysine 181 the chain carries N6-acetyllysine; alternate. A Glycyl lysine isopeptide (Lys-Gly) (interchain with G-Cter in SUMO1); alternate cross-link involves residue lysine 181. A Glycyl lysine isopeptide (Lys-Gly) (interchain with G-Cter in SUMO2); alternate cross-link involves residue lysine 181. An N6-acetyllysine mark is found at lysine 193 and lysine 198. Lysine 218 is covalently cross-linked (Glycyl lysine isopeptide (Lys-Gly) (interchain with G-Cter in SUMO1)). Residue lysine 235 is modified to N6-acetyllysine. Serine 261 bears the Phosphoserine mark. Lysine 272 is modified (N6-acetyllysine). An N6-acetyllysine; alternate modification is found at lysine 295. Lysine 295 is covalently cross-linked (Glycyl lysine isopeptide (Lys-Gly) (interchain with G-Cter in SUMO2); alternate). Residues 302–324 form a Cortactin 7; truncated repeat; the sequence is YAKGFGGKYGVQKDRMDKNASTF. N6-acetyllysine occurs at positions 304, 309, 314, and 346. Positions 348 to 401 form a coiled coil; sequence SNIRANFENLAKEREQEDRRKAEAERAQRMAKERQEQEEARRKLEEQARAKKQT. Positions 355-424 are disordered; it reads ENLAKEREQE…PPSSPIYEDA (70 aa). Residues 357–396 show a composition bias toward basic and acidic residues; sequence LAKEREQEDRRKAEAERAQRMAKERQEQEEARRKLEEQAR. Threonine 401 is subject to Phosphothreonine. Phosphoserine is present on residues serine 405, serine 407, serine 417, and serine 418. Phosphotyrosine is present on residues tyrosine 421 and tyrosine 442. Position 443 is a phosphoserine (serine 443). Tyrosine 466 is subject to Phosphotyrosine; by FAK1. Residues tyrosine 482 and tyrosine 485 each carry the phosphotyrosine; by SRC modification. The 59-residue stretch at 488–546 folds into the SH3 domain; it reads DLGITAIALYDYQAAGDDEISFDPDDIITNIEMIDDGWWRGVCKGRYGLFPANYVELRQ.

In terms of assembly, part of a complex composed of NEDD9, AURKA and CTTN; within the complex NEDD9 acts as a scaffold protein and is required for complex formation. Interacts (via N-terminus) with NEDD9. Identified in a complex containing FGFR4, NCAM1, CDH2, PLCG1, FRS2, SRC, SHC1, GAP43 and CTTN. Forms a complex with ABL1 and MYLK. Interacts with SHANK2 and SHANK3 (via its SH3 domain). Interacts with PLXDC2 and SRCIN1. Interacts with SAMSN1 (via SH3 domain). Interacts (via SH3 domain) with ASAP1 (via Pro-rich region). Interacts (via SH3 domain) with DNM2. Interacts with ACTN1. Interacts with FER. Interacts with KCNA2 (via non-phosphorylated C-terminus). Interacts with FGD1. Interacts with ABL2. Interacts with CTTNBP2NL; this interaction may target CTTN to stress fibers. Interacts with CTTNBP2; this interaction may target CTTN at the cell cortex or dendritic spines. Interacts with KCNH1. Interacts (via SH3 domain) with DIP2A (via N-terminus); the interaction enhances CTTN acetylation and is required for proper synaptic transmission. Interacts with XIRP1 (via N-terminus); the interaction promotes CTTN localization to intercalated disks in cardiomyocytes. In terms of processing, acetylated. Post-translationally, phosphorylated by FER. Phosphorylated in response to FGR activation. Phosphorylation by SRC promotes MYLK binding. Phosphorylated on tyrosine residues in response to CHRM1 activation. Phosphorylated by PTK2/FAK1 in response to cell adhesion. Tyrosine phosphorylation in transformed cells may contribute to cellular growth regulation and transformation. Phosphorylated by PKN2 at both serine and threonine residues in a GTP-bound Rac1-dependent manner in hyaluronan-induced astrocytes and hence down-regulated CTTN ability to associate with filamentous actin. Expressed at intercalated disks in the heart (at protein level). Expressed in most tissues, except in B-lymphocytes or plasma cells.

The protein localises to the cytoplasm. It is found in the cytoskeleton. Its subcellular location is the cell projection. The protein resides in the lamellipodium. It localises to the ruffle. The protein localises to the dendrite. It is found in the cell membrane. Its subcellular location is the podosome. The protein resides in the cell junction. It localises to the focal adhesion. The protein localises to the membrane. It is found in the clathrin-coated pit. Its subcellular location is the dendritic spine. The protein resides in the cell cortex. It localises to the endoplasmic reticulum. Its function is as follows. Contributes to the organization of the actin cytoskeleton and cell shape. Plays a role in the formation of lamellipodia and in cell migration. Plays a role in the regulation of neuron morphology, axon growth and formation of neuronal growth cones. Through its interaction with CTTNBP2, involved in the regulation of neuronal spine density. Plays a role in focal adhesion assembly and turnover. In complex with ABL1 and MYLK regulates cortical actin-based cytoskeletal rearrangement critical to sphingosine 1-phosphate (S1P)-mediated endothelial cell (EC) barrier enhancement. Plays a role in intracellular protein transport and endocytosis, and in modulating the levels of potassium channels present at the cell membrane. Plays a role in receptor-mediated endocytosis via clathrin-coated pits. Required for stabilization of KCNH1 channels at the cell membrane. The protein is Src substrate cortactin (Cttn) of Mus musculus (Mouse).